The sequence spans 336 residues: Urokinase plasminogen activator surface receptor (336 aa).

Residues 1 to 23 (MGHPLLLPLLLLLLHTGVPASWG) form the signal peptide. UPAR/Ly6 domains are found at residues 24 to 111 (LRCM…VTFP), 116 to 208 (LECI…LSLA), and 215 to 302 (HRCY…EDIQ). 3 cysteine pairs are disulfide-bonded: Cys-26–Cys-47, Cys-29–Cys-35, and Cys-40–Cys-68. Asn-75 carries an N-linked (GlcNAc...) asparagine glycan. Disulfide bonds link Cys-94/Cys-99, Cys-118/Cys-145, Cys-121/Cys-128, Cys-138/Cys-170, Cys-176/Cys-193, Cys-194/Cys-199, Cys-217/Cys-245, Cys-220/Cys-228, Cys-238/Cys-264, Cys-270/Cys-288, and Cys-289/Cys-294. N-linked (GlcNAc...) asparagine glycosylation is found at Asn-195 and Asn-223.

As to quaternary structure, monomer. Interacts (via the UPAR/Ly6 domains) with SRPX2. Interacts with MRC2. Interacts with FAP (seprase); the interaction occurs at the cell surface of invadopodia membrane. Interacts with SORL1 (via N-terminal ectodomain); this interaction decreases PLAUR internalization. The ternary complex composed of PLAUR-PLAU-SERPINE1 also interacts with SORL1.

The protein resides in the cell membrane. The protein localises to the cell projection. It is found in the invadopodium membrane. Its function is as follows. Acts as a receptor for urokinase plasminogen activator. Plays a role in localizing and promoting plasmin formation. Mediates the proteolysis-independent signal transduction activation effects of U-PA. It is subject to negative-feedback regulation by U-PA which cleaves it into an inactive form. The chain is Urokinase plasminogen activator surface receptor (PLAUR) from Aotus trivirgatus (Three-striped night monkey).